A 182-amino-acid chain; its full sequence is UPF0316 protein BCG9842_B1857 (182 aa).

3 helical membrane-spanning segments follow: residues 6 to 26, 32 to 52, and 58 to 78; these read LIFV…ILLV, SAAG…GIVF, and WMNI…GGYI.

This sequence belongs to the UPF0316 family.

Its subcellular location is the cell membrane. This chain is UPF0316 protein BCG9842_B1857, found in Bacillus cereus (strain G9842).